Reading from the N-terminus, the 140-residue chain is Large ribosomal subunit protein uL11 (140 aa).

The protein belongs to the universal ribosomal protein uL11 family. As to quaternary structure, part of the ribosomal stalk of the 50S ribosomal subunit. Interacts with L10 and the large rRNA to form the base of the stalk. L10 forms an elongated spine to which L12 dimers bind in a sequential fashion forming a multimeric L10(L12)X complex. One or more lysine residues are methylated.

Its function is as follows. Forms part of the ribosomal stalk which helps the ribosome interact with GTP-bound translation factors. This is Large ribosomal subunit protein uL11 from Geobacter metallireducens (strain ATCC 53774 / DSM 7210 / GS-15).